A 548-amino-acid chain; its full sequence is Chaperonin GroEL (548 aa).

Residues 30–33 (TLGP), lysine 51, 87–91 (DGTTT), glycine 415, and aspartate 496 each bind ATP. Residues 527–548 (SDKEDAMPPMRGGMGGMGGMDF) form a disordered region. The segment covering 538 to 548 (GGMGGMGGMDF) has biased composition (gly residues).

Belongs to the chaperonin (HSP60) family. As to quaternary structure, forms a cylinder of 14 subunits composed of two heptameric rings stacked back-to-back. Interacts with the co-chaperonin GroES.

It is found in the cytoplasm. It catalyses the reaction ATP + H2O + a folded polypeptide = ADP + phosphate + an unfolded polypeptide.. Its function is as follows. Together with its co-chaperonin GroES, plays an essential role in assisting protein folding. The GroEL-GroES system forms a nano-cage that allows encapsulation of the non-native substrate proteins and provides a physical environment optimized to promote and accelerate protein folding. The sequence is that of Chaperonin GroEL from Rickettsia akari (strain Hartford).